Reading from the N-terminus, the 187-residue chain is dCTP deaminase (187 aa).

Residues 110–115, 134–136, Gln-155, Tyr-169, and Gln-179 each bind dCTP; these read KSTYAR and TLE. Glu-136 acts as the Proton donor/acceptor in catalysis.

It belongs to the dCTP deaminase family. In terms of assembly, homotrimer.

The catalysed reaction is dCTP + H2O + H(+) = dUTP + NH4(+). Its pathway is pyrimidine metabolism; dUMP biosynthesis; dUMP from dCTP (dUTP route): step 1/2. Catalyzes the deamination of dCTP to dUTP. The protein is dCTP deaminase of Bordetella bronchiseptica (strain ATCC BAA-588 / NCTC 13252 / RB50) (Alcaligenes bronchisepticus).